The chain runs to 529 residues: Lysine--tRNA ligase (529 aa).

Residues 29-37 (ISGSVHIGN) carry the 'HIGH' region motif. The 'KMSKS' region signature appears at 274 to 278 (AMSKS). K277 lines the ATP pocket.

The protein belongs to the class-I aminoacyl-tRNA synthetase family.

It localises to the cytoplasm. The catalysed reaction is tRNA(Lys) + L-lysine + ATP = L-lysyl-tRNA(Lys) + AMP + diphosphate. This is Lysine--tRNA ligase from Methanosphaera stadtmanae (strain ATCC 43021 / DSM 3091 / JCM 11832 / MCB-3).